Reading from the N-terminus, the 440-residue chain is NK1 transcription factor-related protein 1 (440 aa).

Residues 1 to 13 (MSTSGPAAPGDVP) show a composition bias toward low complexity. Disordered stretches follow at residues 1–82 (MSTS…RPTS), 145–291 (GVAA…PRRA), and 342–387 (KWKK…PMGA). The span at 14–31 (ALPPPPPGPGSGPAPPAP) shows a compositional bias: pro residues. Low complexity-rich tracts occupy residues 62–74 (VPAV…AARP) and 145–158 (GVAA…TSAG). The span at 170 to 181 (GYSSGSGRSPTA) shows a compositional bias: polar residues. Residues 182-198 (DSEDEAPEDEDEEEAPE) are compositionally biased toward acidic residues. Gly residues predominate over residues 210–222 (GGSGGLGARGSGC). Over residues 237–269 (AAPGPRGNSPGAPGPPATATGAGSAGSTPQGAA) the composition is skewed to low complexity. Positions 288 to 347 (PRRARTAFTYEQLVALENKFKATRYLSVCERLNLALSLSLTETQVKIWFQNRRTKWKKQN) form a DNA-binding region, homeobox. Positions 356-374 (TGGGGGPGPGAGPGAGLPG) are enriched in gly residues.

It belongs to the NK-1 homeobox family.

It is found in the nucleus. In terms of biological role, may be required for the coordinated crosstalk of factors involved in the maintenance of energy homeostasis, possibly by regulating the transcription of specific factors involved in energy balance. In Mus musculus (Mouse), this protein is NK1 transcription factor-related protein 1.